Here is a 157-residue protein sequence, read N- to C-terminus: Large ribosomal subunit protein uL15 (157 aa).

Residues 1 to 13 (MKLNDLRDKDGAT) show a composition bias toward basic and acidic residues. A disordered region spans residues 1 to 39 (MKLNDLRDKDGATHSKKRLGRGIGSGSGKTAGRGVKGQK). Gly residues predominate over residues 21–35 (RGIGSGSGKTAGRGV).

It belongs to the universal ribosomal protein uL15 family. In terms of assembly, part of the 50S ribosomal subunit.

Binds to the 23S rRNA. In Mesorhizobium japonicum (strain LMG 29417 / CECT 9101 / MAFF 303099) (Mesorhizobium loti (strain MAFF 303099)), this protein is Large ribosomal subunit protein uL15.